The primary structure comprises 287 residues: Pyridoxal kinase PdxY (287 aa).

Residues serine 9 and 44 to 45 (MQ) contribute to the substrate site. ATP is bound by residues aspartate 111, alanine 142, glutamate 147, and lysine 180. Position 221 (aspartate 221) interacts with substrate.

It belongs to the pyridoxine kinase family. PdxY subfamily. Homodimer. Mg(2+) is required as a cofactor.

The catalysed reaction is pyridoxal + ATP = pyridoxal 5'-phosphate + ADP + H(+). It participates in cofactor metabolism; pyridoxal 5'-phosphate salvage; pyridoxal 5'-phosphate from pyridoxal: step 1/1. In terms of biological role, pyridoxal kinase involved in the salvage pathway of pyridoxal 5'-phosphate (PLP). Catalyzes the phosphorylation of pyridoxal to PLP. This chain is Pyridoxal kinase PdxY, found in Burkholderia thailandensis (strain ATCC 700388 / DSM 13276 / CCUG 48851 / CIP 106301 / E264).